Here is a 219-residue protein sequence, read N- to C-terminus: Probable GTP-binding protein EngB (219 aa).

The EngB-type G domain maps to 31 to 205 (VGVEIAFAGR…LSILNEWCHP (175 aa)). GTP contacts are provided by residues 39-46 (GRSNAGKS), 66-70 (GRTQL), 84-87 (DLPG), 151-154 (TKSD), and 184-186 (FSA). Mg(2+) is bound by residues serine 46 and threonine 68.

This sequence belongs to the TRAFAC class TrmE-Era-EngA-EngB-Septin-like GTPase superfamily. EngB GTPase family. Mg(2+) is required as a cofactor.

Its function is as follows. Necessary for normal cell division and for the maintenance of normal septation. This is Probable GTP-binding protein EngB from Shewanella sp. (strain MR-7).